We begin with the raw amino-acid sequence, 553 residues long: Protein DA1-related 1 (553 aa).

Residues 10–41 (GSSHKFSDGQCNGRYREDRNLEGPRYSAEGSD) are disordered. Residues 42-61 (FDKEEIECAIALSLSEQEHV) enclose the UIM 1 domain. Over residues 62–77 (IPQDDKGKKIIEYKSE) the composition is skewed to basic and acidic residues. The disordered stretch occupies residues 62 to 91 (IPQDDKGKKIIEYKSETEEDDDDDEDEDEE). Residues 78 to 91 (TEEDDDDDEDEDEE) are compositionally biased toward acidic residues. The UIM 2 domain occupies 87–106 (DEDEEYMRAQLEAAEEEERR). The UIM 3; degenerate domain occupies 122–141 (AQLEETEKLLAKARLEEEEM). Positions 149–168 (EEDELLAKALQESMNVGSPP) constitute a UIM 4 domain. Ser166 carries the post-translational modification Phosphoserine. In terms of domain architecture, LIM zinc-binding spans 188–248 (RICVGCQAEI…KLCYKEQHHP (61 aa)).

As to quaternary structure, interacts with ubiquitin, TCP14 and TCP15. In terms of processing, polyubiquitinated by DA2.

Its function is as follows. Acts redundantly with DA1 and DAR2 to regulate endoreduplication during leaf development. Together with DA1 and DAR2, modulates the protein stability of the transcription factors TCP14 and TCP15, which repress endoreduplication by directly regulating the expression of cell-cycle genes. This Arabidopsis thaliana (Mouse-ear cress) protein is Protein DA1-related 1.